Consider the following 182-residue polypeptide: Crossover junction endodeoxyribonuclease RuvC (182 aa).

Residues Asp-7, Glu-68, and Asp-141 contribute to the active site. Mg(2+) is bound by residues Asp-7, Glu-68, and Asp-141.

Belongs to the RuvC family. In terms of assembly, homodimer which binds Holliday junction (HJ) DNA. The HJ becomes 2-fold symmetrical on binding to RuvC with unstacked arms; it has a different conformation from HJ DNA in complex with RuvA. In the full resolvosome a probable DNA-RuvA(4)-RuvB(12)-RuvC(2) complex forms which resolves the HJ. Mg(2+) is required as a cofactor.

The protein localises to the cytoplasm. It carries out the reaction Endonucleolytic cleavage at a junction such as a reciprocal single-stranded crossover between two homologous DNA duplexes (Holliday junction).. Its function is as follows. The RuvA-RuvB-RuvC complex processes Holliday junction (HJ) DNA during genetic recombination and DNA repair. Endonuclease that resolves HJ intermediates. Cleaves cruciform DNA by making single-stranded nicks across the HJ at symmetrical positions within the homologous arms, yielding a 5'-phosphate and a 3'-hydroxyl group; requires a central core of homology in the junction. The consensus cleavage sequence is 5'-(A/T)TT(C/G)-3'. Cleavage occurs on the 3'-side of the TT dinucleotide at the point of strand exchange. HJ branch migration catalyzed by RuvA-RuvB allows RuvC to scan DNA until it finds its consensus sequence, where it cleaves and resolves the cruciform DNA. This Thermobifida fusca (strain YX) protein is Crossover junction endodeoxyribonuclease RuvC.